The chain runs to 869 residues: AP-3 complex subunit delta (869 aa).

Residue serine 2 is modified to N-acetylserine. HEAT repeat units follow at residues 33–70 (NFISRAVEEIRREIKATDLSTKSTALHKLSYLAALHGV), 107–142 (SVMLLITNQVRKDLNSANEYEVSLALECLSRIGTHD), 143–179 (LARDLTPEVFTLLGSSKSFVKKKAIGVVLRVFEKYHD), 180–216 (AVKVCFKRLVENLETSDPQILSAVVGVFCELATKDPQ), 218–254 (CLPLAPEFYKVLVDSRNNWVLIKVLKIFAKLALIEPR), 292–329 (AAVKLAVAKIREFLVEDDPNLKYLGLNALSIVAPKHLW), and 330–366 (AVLENKEVVVKAMSDEDPNVKLEALHLLMAMVNEDNV). The interval 738 to 869 (ISQDSFNPKR…EQVIIPDFLL (132 aa)) is disordered. Residues 769–780 (ITPQAKTNIQTA) are compositionally biased toward polar residues. Residues 815 to 830 (QEKEESSRIENHQNSE) are compositionally biased toward basic and acidic residues. The segment covering 831–850 (KKKKKKKKKKGEGSSKHKSR) has biased composition (basic residues).

This sequence belongs to the adaptor complexes large subunit family. Adaptor protein complex 3 (AP-3) is a heterotetramer composed of two large adaptins (delta-type subunit and beta-type subunit), a medium adaptin (mu-type subunit) and a small adaptin (sigma-type subunit). Binds to EPSIN2.

It is found in the cytoplasm. It localises to the golgi apparatus membrane. Functionally, part of the AP-3 complex, an adaptor-related complex which seems to be clathrin-associated. The complex is associated with the Golgi region as well as more peripheral structures. It facilitates the budding of vesicles from the Golgi membrane and may be directly involved in trafficking to the vacuole. It also function in maintaining the identity of lytic vacuoles and in regulating the transition between storage and lytic vacuoles. In Arabidopsis thaliana (Mouse-ear cress), this protein is AP-3 complex subunit delta (DELTA-ADR).